Consider the following 358-residue polypeptide: Thiol protease aleurain-like (358 aa).

Positions 1–21 are cleaved as a signal peptide; the sequence is MSVKLNLSSSILLILFAAAAS. The propeptide at 22–140 is activation peptide; that stretch reads KEIGFDESNP…KGSHKITEAT (119 aa). The N-linked (GlcNAc...) asparagine glycan is linked to Asn-125. Cystine bridges form between Cys-162/Cys-205 and Cys-196/Cys-238. The active site involves Cys-165. N-linked (GlcNAc...) asparagine glycosylation is present at Asn-254. The cysteines at positions 296 and 346 are disulfide-linked. Catalysis depends on residues His-305 and Asn-325.

This sequence belongs to the peptidase C1 family.

The protein resides in the vacuole. It catalyses the reaction Hydrolysis of proteins, acting as an aminopeptidase (notably, cleaving Arg-|-Xaa bonds) as well as an endopeptidase.. In terms of biological role, may play a role in proteolysis leading to mobilization of nitrogen during senescence and starvation. This Arabidopsis thaliana (Mouse-ear cress) protein is Thiol protease aleurain-like.